We begin with the raw amino-acid sequence, 386 residues long: Small ribosomal subunit protein uS3m (386 aa).

Belongs to the universal ribosomal protein uS3 family.

It localises to the mitochondrion. Essential for mitochondrial protein synthesis and required for the maturation of small ribosomal subunits. The chain is Small ribosomal subunit protein uS3m (VAR1) from Wickerhamomyces canadensis (Yeast).